Here is a 400-residue protein sequence, read N- to C-terminus: Acetate kinase (400 aa).

Asn-10 serves as a coordination point for Mg(2+). Lys-17 serves as a coordination point for ATP. Arg-91 serves as a coordination point for substrate. Asp-150 serves as the catalytic Proton donor/acceptor. ATP is bound by residues 210 to 214, 285 to 287, and 333 to 337; these read HLGNG, DCR, and GIGEN. Glu-387 lines the Mg(2+) pocket.

Belongs to the acetokinase family. As to quaternary structure, homodimer. Mg(2+) is required as a cofactor. Requires Mn(2+) as cofactor.

Its subcellular location is the cytoplasm. The enzyme catalyses acetate + ATP = acetyl phosphate + ADP. The protein operates within metabolic intermediate biosynthesis; acetyl-CoA biosynthesis; acetyl-CoA from acetate: step 1/2. Functionally, catalyzes the formation of acetyl phosphate from acetate and ATP. Can also catalyze the reverse reaction. The chain is Acetate kinase from Pectobacterium carotovorum subsp. carotovorum (strain PC1).